The primary structure comprises 197 residues: Translation machinery-associated protein 22 (197 aa).

Residues 103–174 enclose the SUI1 domain; that stretch reads IRIKRVERNK…DVREFLIKNY (72 aa).

The protein belongs to the DENR family. Interacts with the 40S ribosomal subunit.

It localises to the cytoplasm. The chain is Translation machinery-associated protein 22 (tma22) from Botryotinia fuckeliana (strain B05.10) (Noble rot fungus).